The following is a 432-amino-acid chain: MALRPCTGFTISSLRNASAANNNLFSLLSFSSSSPAKRNLLLSSLQDNLRRFASSASLYRQHLRNQQQQHQQQQQSRVKEKSETLAQKIGKSIRRAGAPSKARVYADVNVVRPKDYWDYESLAVQWGVQDDYEVVRKVGRGKYSEVFEGIHATDNEKCVIKILKPVKKKKIKREIKILQNLCGGPNIVKLLDIVRDQQSKTPSLIFEHVNNKDFKVLYPTLSDYDVRYYIFELLKALDFCHSRGIMHRDVKPHNVMIDHEQRKLRLIDWGLAEFYHPGKEYNVRVASRYFKGPELLVDLQDYDYSLDLWSLGCMFAGMIFRKEPFFYGHDNYDQLVKIAKVLGTDELNAYLNKYRIELDPNLTSLVGRHSRKPWTKFINSENQHLAVPEAVDFVDKLLRYDHQERPTAKEAMAHPYFYPIRNAESSRTPRSQ.

The N-terminal 55 residues, 1 to 55 (MALRPCTGFTISSLRNASAANNNLFSLLSFSSSSPAKRNLLLSSLQDNLRRFASS), are a transit peptide targeting the chloroplast. The segment at 63–83 (LRNQQQQHQQQQQSRVKEKSE) is disordered. The segment covering 66–75 (QQQQHQQQQQ) has biased composition (low complexity). The Protein kinase domain occupies 132-417 (YEVVRKVGRG…AKEAMAHPYF (286 aa)). Residues 138–146 (VGRGKYSEV) and Lys161 each bind ATP. The Proton acceptor role is filled by Asp249.

This sequence belongs to the protein kinase superfamily. Ser/Thr protein kinase family. CK2 subfamily. As to quaternary structure, tetramer of two alpha and two beta chains. Expressed in root tips, lateral root primordia, cotyledons, leaf primordia, sepals, filaments, stigma, and anthers.

Its subcellular location is the plastid. The protein localises to the chloroplast. The enzyme catalyses L-seryl-[protein] + ATP = O-phospho-L-seryl-[protein] + ADP + H(+). It carries out the reaction L-threonyl-[protein] + ATP = O-phospho-L-threonyl-[protein] + ADP + H(+). In terms of biological role, casein kinases are operationally defined by their preferential utilization of acidic proteins such as caseins as substrates. The alpha chain contains the catalytic site. Involved in the regulation of various developmental processes. Involved in the regulation of plant growth and flowering time. Involved in retrograde signaling in plant responses to abscisic acid (ABA) and heat stress. May act as an enhancing factor in abiotic stress signaling through modulation of the expression of some molecular players in retrograde signaling. Phosphorylates RuBisCo activase (RCA) at Thr-78. The sequence is that of Casein kinase II subunit alpha-4, chloroplastic from Arabidopsis thaliana (Mouse-ear cress).